A 655-amino-acid chain; its full sequence is Tumor necrosis factor receptor superfamily member 21 (655 aa).

Residues 1–41 (MGTSASSITALASCSRIAGQVGATMVAGSLLLLGFLSTITA) form the signal peptide. At 42-349 (QPEQKTLSLT…PHKHFDINEH (308 aa)) the chain is on the extracellular side. 4 TNFR-Cys repeats span residues 50–88 (LTGT…LRVC), 90–131 (SCPS…DREC), 133–167 (CPPG…EDVR), and 170–211 (QCAR…DNVC). 9 cysteine pairs are disulfide-bonded: cysteine 67-cysteine 80, cysteine 70-cysteine 88, cysteine 91-cysteine 106, cysteine 109-cysteine 123, cysteine 113-cysteine 131, cysteine 133-cysteine 144, cysteine 150-cysteine 168, cysteine 171-cysteine 186, and cysteine 192-cysteine 211. Asparagine 82 carries N-linked (GlcNAc...) asparagine glycosylation. 2 disordered regions span residues 214–306 (HLSS…GPHH) and 318–338 (EATG…HPRQ). Residues 216–225 (SSSSTTPSSP) show a composition bias toward low complexity. 2 stretches are compositionally biased toward polar residues: residues 241 to 262 (VPSS…TASV) and 276 to 302 (PDNT…THQQ). Asparagine 252, asparagine 278, and asparagine 289 each carry an N-linked (GlcNAc...) asparagine glycan. Residues 350-370 (LPWMIVLFLLLVLVLIVVCSI) form a helical membrane-spanning segment. Cysteine 368 is lipidated: S-palmitoyl cysteine. The Cytoplasmic segment spans residues 371 to 655 (RKSSRTLKKG…SVYSHLPDLL (285 aa)). The 84-residue stretch at 415 to 498 (GIDILKLVAA…DVVEKIRGLM (84 aa)) folds into the Death domain.

As to quaternary structure, associates with TRADD. Interacts with NGFR. Interacts with CASP8. Oxidized in response to reactive oxygen species (ROS), leading to endocytosis. In terms of tissue distribution, detected in brain (at protein level). Detected in corpus callosum oligodendrocytes. Detected in embryonic and adult brain.

The protein localises to the cell membrane. Functionally, promotes apoptosis, possibly via a pathway that involves the activation of NF-kappa-B. Can also promote apoptosis mediated by BAX and by the release of cytochrome c from the mitochondria into the cytoplasm. Trophic-factor deprivation triggers the cleavage of surface APP by beta-secretase to release sAPP-beta which is further cleaved to release an N-terminal fragment of APP (N-APP). Negatively regulates oligodendrocyte survival, maturation and myelination. Plays a role in signaling cascades triggered by stimulation of T-cell receptors, in the adaptive immune response and in the regulation of T-cell differentiation and proliferation. Negatively regulates T-cell responses and the release of cytokines such as IL4, IL5, IL10, IL13 and IFNG by Th2 cells. Negatively regulates the production of IgG, IgM and IgM in response to antigens. May inhibit the activation of JNK in response to T-cell stimulation. Also acts as a regulator of pyroptosis: recruits CASP8 in response to reactive oxygen species (ROS) and subsequent oxidation, leading to activation of GSDMC. The polypeptide is Tumor necrosis factor receptor superfamily member 21 (Tnfrsf21) (Rattus norvegicus (Rat)).